The sequence spans 407 residues: Phosphopentomutase (407 aa).

The Mn(2+) site is built by Asp-10, Asp-306, His-311, Asp-347, His-348, and His-359.

The protein belongs to the phosphopentomutase family. Mn(2+) is required as a cofactor.

It localises to the cytoplasm. It carries out the reaction 2-deoxy-alpha-D-ribose 1-phosphate = 2-deoxy-D-ribose 5-phosphate. It catalyses the reaction alpha-D-ribose 1-phosphate = D-ribose 5-phosphate. The protein operates within carbohydrate degradation; 2-deoxy-D-ribose 1-phosphate degradation; D-glyceraldehyde 3-phosphate and acetaldehyde from 2-deoxy-alpha-D-ribose 1-phosphate: step 1/2. Its function is as follows. Isomerase that catalyzes the conversion of deoxy-ribose 1-phosphate (dRib-1-P) and ribose 1-phosphate (Rib-1-P) to deoxy-ribose 5-phosphate (dRib-5-P) and ribose 5-phosphate (Rib-5-P), respectively. In Erwinia tasmaniensis (strain DSM 17950 / CFBP 7177 / CIP 109463 / NCPPB 4357 / Et1/99), this protein is Phosphopentomutase.